The following is a 453-amino-acid chain: Aspartate aminotransferase, chloroplastic (453 aa).

A chloroplast-targeting transit peptide spans 1–44 (MASLMLSLGSTSLLPREINKDKLKLGTSASNPFLKAKSFSRVTM). L-aspartate contacts are provided by glycine 85, tryptophan 181, and asparagine 234. Lysine 298 carries the N6-(pyridoxal phosphate)lysine modification. Arginine 427 provides a ligand contact to L-aspartate.

The protein belongs to the class-I pyridoxal-phosphate-dependent aminotransferase family. In terms of assembly, homodimer. The cofactor is pyridoxal 5'-phosphate.

The protein resides in the plastid. The protein localises to the chloroplast. It localises to the amyloplast. It carries out the reaction L-aspartate + 2-oxoglutarate = oxaloacetate + L-glutamate. Functionally, amino acid aminotransferase important for the metabolism of amino acids and Krebs-cycle related organic acids. No activity with D-Asp or D-Ala as amino donors. In plants, it is involved in nitrogen metabolism and in aspects of carbon and energy metabolism. The protein is Aspartate aminotransferase, chloroplastic (ASP5) of Arabidopsis thaliana (Mouse-ear cress).